The chain runs to 247 residues: Uridylate kinase (247 aa).

15-18 is an ATP binding site; sequence KLSG. Residues 23–28 are involved in allosteric activation by GTP; it reads GDEGFG. UMP is bound at residue G57. Residues G58 and R62 each coordinate ATP. Residues D77 and 138–145 contribute to the UMP site; that span reads TGNPFFTT. Positions 165, 171, and 174 each coordinate ATP.

It belongs to the UMP kinase family. Homohexamer.

It is found in the cytoplasm. The catalysed reaction is UMP + ATP = UDP + ADP. It participates in pyrimidine metabolism; CTP biosynthesis via de novo pathway; UDP from UMP (UMPK route): step 1/1. With respect to regulation, allosterically activated by GTP. Inhibited by UTP. Functionally, catalyzes the reversible phosphorylation of UMP to UDP. The polypeptide is Uridylate kinase (Colwellia psychrerythraea (strain 34H / ATCC BAA-681) (Vibrio psychroerythus)).